We begin with the raw amino-acid sequence, 916 residues long: Isoleucine--tRNA ligase (916 aa).

The 'HIGH' region signature appears at 57–67; the sequence is PYANGNLHMGH. Residue E554 coordinates L-isoleucyl-5'-AMP. The 'KMSKS' region motif lies at 595–599; sequence KMSKS. An ATP-binding site is contributed by K598. Zn(2+)-binding residues include C885, C888, C905, and C908.

The protein belongs to the class-I aminoacyl-tRNA synthetase family. IleS type 1 subfamily. As to quaternary structure, monomer. The cofactor is Zn(2+).

It is found in the cytoplasm. The enzyme catalyses tRNA(Ile) + L-isoleucine + ATP = L-isoleucyl-tRNA(Ile) + AMP + diphosphate. Catalyzes the attachment of isoleucine to tRNA(Ile). As IleRS can inadvertently accommodate and process structurally similar amino acids such as valine, to avoid such errors it has two additional distinct tRNA(Ile)-dependent editing activities. One activity is designated as 'pretransfer' editing and involves the hydrolysis of activated Val-AMP. The other activity is designated 'posttransfer' editing and involves deacylation of mischarged Val-tRNA(Ile). This Staphylococcus saprophyticus subsp. saprophyticus (strain ATCC 15305 / DSM 20229 / NCIMB 8711 / NCTC 7292 / S-41) protein is Isoleucine--tRNA ligase.